Consider the following 309-residue polypeptide: UDP-N-acetylenolpyruvoylglucosamine reductase (309 aa).

Positions Val-33–Gly-195 constitute an FAD-binding PCMH-type domain. Arg-175 is an active-site residue. Ser-224 serves as the catalytic Proton donor. Glu-294 is an active-site residue.

It belongs to the MurB family. The cofactor is FAD.

The protein localises to the cytoplasm. It catalyses the reaction UDP-N-acetyl-alpha-D-muramate + NADP(+) = UDP-N-acetyl-3-O-(1-carboxyvinyl)-alpha-D-glucosamine + NADPH + H(+). Its pathway is cell wall biogenesis; peptidoglycan biosynthesis. Its function is as follows. Cell wall formation. The sequence is that of UDP-N-acetylenolpyruvoylglucosamine reductase from Granulibacter bethesdensis (strain ATCC BAA-1260 / CGDNIH1).